Consider the following 443-residue polypeptide: Serine/threonine-protein phosphatase 2A 55 kDa regulatory subunit B beta isoform (443 aa).

WD repeat units follow at residues Thr-22–Val-61, Glu-87–Glu-128, Ala-171–Asn-209, and Glu-220–Arg-260. Ser-275 carries the phosphoserine modification. WD repeat units lie at residues Glu-279–Glu-317, Glu-334–Leu-375, and Asp-410–Val-442. Position 295 is a phosphotyrosine (Tyr-295). Thr-298 bears the Phosphothreonine mark.

It belongs to the phosphatase 2A regulatory subunit B family. PP2A consists of a common heterodimeric core enzyme, composed of a 36 kDa catalytic subunit (subunit C) and a 65 kDa constant regulatory subunit (PR65 or subunit A), that associates with a variety of regulatory subunits. Proteins that associate with the core dimer include three families of regulatory subunits B (the R2/B/PR55/B55, R3/B''/PR72/PR130/PR59 and R5/B'/B56 families), the 48 kDa variable regulatory subunit, viral proteins, and cell signaling molecules. Interacts with IER5 (via N- and C-terminal regions). Interacts with TOMM22. In terms of tissue distribution, expressed in the brain. Isoform 1 and isoform 2 are expressed in the forbrain. Isoform 1 is more strongly expressed than isoform 2 in the olfactory bulb. Isoform 1 and isoform 2 are weakly expressed in the cerebellum. Isoform 1 is expressed in the testis. Isoform 2 expression is undetectable at birth rising to adult level at day 14.

It localises to the cytoplasm. It is found in the cytoskeleton. The protein localises to the membrane. Its subcellular location is the mitochondrion. The protein resides in the mitochondrion outer membrane. Functionally, the B regulatory subunit might modulate substrate selectivity and catalytic activity, and might also direct the localization of the catalytic enzyme to a particular subcellular compartment. Within the PP2A holoenzyme complex, isoform 2 is required to promote proapoptotic activity. Isoform 2 regulates neuronal survival through the mitochondrial fission and fusion balance. The chain is Serine/threonine-protein phosphatase 2A 55 kDa regulatory subunit B beta isoform (Ppp2r2b) from Rattus norvegicus (Rat).